The chain runs to 130 residues: Blasticidin-S deaminase (130 aa).

One can recognise a CMP/dCMP-type deaminase domain in the interval 1 to 129; sequence MPLSQEESTL…ELLPSGYMNR (129 aa). Substrate is bound at residue S28. Zn(2+) is bound at residue C54. The active-site Proton donor is E56. R82 contributes to the substrate binding site. 2 residues coordinate Zn(2+): C88 and C91. Y126 is a substrate binding site.

Belongs to the cytidine and deoxycytidylate deaminase family. Homotetramer. It depends on Zn(2+) as a cofactor.

The enzyme catalyses blasticidin S + H2O + H(+) = deaminohydroxyblasticidin S + NH4(+). In terms of biological role, catalyzes the deamination of the cytosine moiety of the antibiotics blasticidin S, cytomycin and acetylblasticidin S. The protein is Blasticidin-S deaminase (bsd) of Aspergillus terreus (strain NIH 2624 / FGSC A1156).